The following is a 468-amino-acid chain: Aspartate ammonia-lyase (468 aa).

L-aspartate contacts are provided by Thr99, Ser138, Thr139, Asn140, and Thr185. The interval 315-324 is SS loop; that stretch reads GSSIMPGKVN. Ser316 (proton acceptor) is an active-site residue. Residues Ser317 and Lys322 each contribute to the L-aspartate site.

The protein belongs to the class-II fumarase/aspartase family. Aspartase subfamily. Homotetramer.

It carries out the reaction L-aspartate = fumarate + NH4(+). Functionally, catalyzes the reversible conversion of L-aspartate to fumarate and ammonia. The polypeptide is Aspartate ammonia-lyase (aspA) (Helicobacter pylori (strain J99 / ATCC 700824) (Campylobacter pylori J99)).